Reading from the N-terminus, the 426-residue chain is Crinkler effector protein 4 (426 aa).

The segment at 20-57 (VEIDDSAKVSKLKKVIKEENPATITCDAKDLQLFLAKK) is LQLFLAK domain. The tract at residues 59–107 (DAWLDGAGAAAVELDEHGHPQGCVQMDPTLWVKNPKHFGDNFQPGEGQV) is DWL domain. The HVLVXXP motif motif lies at 108–114 (HVLVVVP). The segment at 115 to 426 (EGVVGSASET…RSIPTLSYFS (312 aa)) is effector domain.

The protein belongs to the Crinkler effector family.

Its subcellular location is the secreted. It localises to the host nucleus. In terms of biological role, secreted effector that is critical to pathogenesis by suppressing plant immune responsess. Promotes Phytophthora infection by suppressing the H(2)O(2) accumulation and callose deposition. May induce cell death by regulating expression of cell death-related genes. In Phytophthora capsici, this protein is Crinkler effector protein 4.